The sequence spans 445 residues: Putative aldehyde dehydrogenase AldX (445 aa).

Active-site residues include Glu214 and Cys248.

It belongs to the aldehyde dehydrogenase family.

It catalyses the reaction an aldehyde + NAD(+) + H2O = a carboxylate + NADH + 2 H(+). This Bacillus subtilis (strain 168) protein is Putative aldehyde dehydrogenase AldX (aldX).